Consider the following 293-residue polypeptide: MNQEQETKLVIITGMSGAGKTVAIQSFEDLGYYCVDNLPPALLPKFLDLMKDATNNIQKVALVMDLRGREFFDSLFEALDVLAKENWLEDHILFLDAKDEALVTRYKETRRSHPLATDGLPLDGIKQEREILDELRGRAQRIIDTTSLKPRNLREKILKVYKEEKQEVFSVHFVSFGFKYGLPIDADLVFDVRFLPNPHYVSNLQPLTGLNPDVSSYVFKWSDTQTFIDKVTDLLTFMLPQYKKEGKSQLVVAIGCTGGQHRSVALAEHFSKVLSNGYTTHVSHRDIDKRKVL.

14-21 (GMSGAGKT) contacts ATP. 65–68 (DLRG) contacts GTP.

It belongs to the RapZ-like family.

Functionally, displays ATPase and GTPase activities. The sequence is that of Nucleotide-binding protein OB2468 from Oceanobacillus iheyensis (strain DSM 14371 / CIP 107618 / JCM 11309 / KCTC 3954 / HTE831).